The following is a 279-amino-acid chain: Proteasome subunit alpha type-1 (279 aa).

Tyr-103 carries the phosphotyrosine modification. Residues 235–249 (HVAIAKENDNDTPRN) show a composition bias toward basic and acidic residues. The interval 235–279 (HVAIAKENDNDTPRNDDDDDRPSPPEEPAAGPRDPEVLVATEQRP) is disordered.

Belongs to the peptidase T1A family. As to quaternary structure, the 26S proteasome consists of a 20S proteasome core and two 19S regulatory subunits. The 20S proteasome core is composed of 28 subunits that are arranged in four stacked rings, resulting in a barrel-shaped structure. The two end rings are each formed by seven alpha subunits, and the two central rings are each formed by seven beta subunits. The catalytic chamber with the active sites is on the inside of the barrel. Interacts with PI31.

The protein resides in the cytoplasm. It is found in the nucleus. In terms of biological role, the proteasome is a multicatalytic proteinase complex which is characterized by its ability to cleave peptides with Arg, Phe, Tyr, Leu, and Glu adjacent to the leaving group at neutral or slightly basic pH. The proteasome has an ATP-dependent proteolytic activity. This Drosophila melanogaster (Fruit fly) protein is Proteasome subunit alpha type-1 (Prosalpha6).